A 307-amino-acid polypeptide reads, in one-letter code: Mitochondrial glycine transporter YMC1 (307 aa).

Solcar repeat units lie at residues 26–106, 121–204, and 218–305; these read VKDL…MKRF, PQYY…LIAN, and PAWK…AMRL. 6 helical membrane passes run 29–49, 83–103, 118–138, 183–203, 223–243, and 277–298; these read LLAG…FDTT, LTPL…NEAM, LSLP…SFLA, TILR…ALIA, CIFG…LDVI, and FFKG…TFAT.

Belongs to the mitochondrial carrier (TC 2.A.29) family.

The protein localises to the mitochondrion inner membrane. Its function is as follows. Secondary mitochondrial glycine transporter required for the biosynthesis of heme at high glycine concentrations. Imports the precursor glycine into the mitochondrial matrix, where it is condensed with succinyl-CoA to produce 5-aminolevulinate (ALA), the first step of heme biosynthesis. The protein is Mitochondrial glycine transporter YMC1 of Saccharomyces cerevisiae (strain ATCC 204508 / S288c) (Baker's yeast).